Reading from the N-terminus, the 354-residue chain is Guanine nucleotide-binding protein G(t) subunit alpha-3 (354 aa).

The tract at residues 1-27 (MGSGISSESKESAKRSKELEKKLQEDA) is disordered. Residue Gly-2 is the site of N-myristoyl glycine attachment. Residues 8 to 27 (ESKESAKRSKELEKKLQEDA) are compositionally biased toward basic and acidic residues. The G-alpha domain maps to 32–354 (RTVKLLLLGA…KENLKDCGLF (323 aa)). The segment at 35 to 48 (KLLLLGAGESGKST) is G1 motif. GTP contacts are provided by residues 40–47 (GAGESGKS), 175–181 (LHSRVKT), 200–204 (DVGGQ), 269–272 (NKKD), and Ala-326. Positions 47 and 181 each coordinate Mg(2+). The tract at residues 173–181 (DVLHSRVKT) is G2 motif. Residues 196–205 (FRMFDVGGQR) form a G3 motif region. The G4 motif stretch occupies residues 265–272 (VLFLNKKD). The segment at 324–329 (TCATDT) is G5 motif.

It belongs to the G-alpha family. G(i/o/t/z) subfamily. In terms of assembly, g proteins are composed of 3 units; alpha, beta and gamma, respectively GNAT3, GNB1 and GNG13 for Gustducin heterotrimer for bitter taste transduction. The alpha chain contains the guanine nucleotide binding site. Component of the TAS2R14-GNAT3 complex, consisting of TAS2R14, GNAT3, GNB1 and GNG2; within the complex interacts with TAS2R14; this complex plays a role in the perception of bitterness. Gustducin heterotrimer may also be composed of GNAT3, GNB3 and GNG13. In terms of processing, potential N-myristoylation may anchor alpha-subunit to the inner surface of plasma membrane. Expressed in taste buds (sensory organs of clustered epithelial cells) of the circumvallate, foliate and fungiform papillae of the tongue, as well as in nasoincisor, palatal and epiglottal taste buds at protein level. Expressed in enteroendocrine of the gut, in the lumenal pole of a subset of brush cells lining the stomach and the intestine at protein level. Detected in solitary cells throughout the respiratory track. Expressed also in spermatozoa.

It localises to the cytoplasm. Functionally, guanine nucleotide-binding protein (G protein) alpha subunit playing a prominent role in bitter and sweet taste transduction as well as in umami (monosodium glutamate, monopotassium glutamate, and inosine monophosphate) taste transduction. Transduction by this alpha subunit involves coupling of specific cell-surface receptors with a cGMP-phosphodiesterase; Activation of phosphodiesterase lowers intracellular levels of cAMP and cGMP which may open a cyclic nucleotide-suppressible cation channel leading to influx of calcium, ultimately leading to release of neurotransmitter. Indeed, denatonium and strychnine induce transient reduction in cAMP and cGMP in taste tissue, whereas this decrease is inhibited by GNAT3 antibody. Gustducin heterotrimer transduces response to bitter and sweet compounds via regulation of phosphodiesterase for alpha subunit, as well as via activation of phospholipase C for beta and gamma subunits, with ultimate increase inositol trisphosphate and increase of intracellular Calcium. GNAT3 can functionally couple to taste receptors to transmit intracellular signal: receptor heterodimer TAS1R2/TAS1R3 senses sweetness and TAS1R1/TAS1R3 transduces umami taste, whereas the T2R family GPCRs act as bitter sensors. Also functions as lumenal sugar sensors in the gut to control the expression of the Na+-glucose transporter SGLT1 in response to dietaty sugar, as well as the secretion of Glucagon-like peptide-1, GLP-1 and glucose-dependent insulinotropic polypeptide, GIP. Thus, may modulate the gut capacity to absorb sugars, with implications for the prevention and treatment of malabsorption syndromes and diet-related disorders including diabetes and obesity. In Rattus norvegicus (Rat), this protein is Guanine nucleotide-binding protein G(t) subunit alpha-3 (Gnat3).